Here is a 287-residue protein sequence, read N- to C-terminus: MEMO1 family protein MJ0403 (287 aa).

This sequence belongs to the MEMO1 family.

The chain is MEMO1 family protein MJ0403 from Methanocaldococcus jannaschii (strain ATCC 43067 / DSM 2661 / JAL-1 / JCM 10045 / NBRC 100440) (Methanococcus jannaschii).